A 644-amino-acid polypeptide reads, in one-letter code: Exoribonuclease 2 (644 aa).

The region spanning 189–516 (REDLTALNFV…NHRLLKAIIT (328 aa)) is the RNB domain. In terms of domain architecture, S1 motif spans 561–643 (DTRFTAEIID…ETRNVIARPV (83 aa)).

It belongs to the RNR ribonuclease family. RNase II subfamily.

It localises to the cytoplasm. It carries out the reaction Exonucleolytic cleavage in the 3'- to 5'-direction to yield nucleoside 5'-phosphates.. In terms of biological role, involved in mRNA degradation. Hydrolyzes single-stranded polyribonucleotides processively in the 3' to 5' direction. The polypeptide is Exoribonuclease 2 (Yersinia pseudotuberculosis serotype O:3 (strain YPIII)).